The primary structure comprises 254 residues: Glycerol operon regulatory protein (254 aa).

In terms of domain architecture, HTH iclR-type spans 5 to 67 (IQSLERAAAM…PASGRYQLGA (63 aa)). Residues 27 to 46 (LSDIASTLGLAKGTAHGILR) constitute a DNA-binding region (H-T-H motif). In terms of domain architecture, IclR-ED spans 82-251 (LRARALVWTD…AAAVSRDLGA (170 aa)).

Functionally, may be an activator protein for the gylABX operon. This chain is Glycerol operon regulatory protein (gylR), found in Streptomyces griseus.